The following is a 1517-amino-acid chain: DNA-directed RNA polymerase subunit beta' (1517 aa).

Residues cysteine 71, cysteine 73, cysteine 86, and cysteine 89 each contribute to the Zn(2+) site. Mg(2+) is bound by residues aspartate 482, aspartate 484, and aspartate 486. Zn(2+)-binding residues include cysteine 812, cysteine 886, cysteine 893, and cysteine 896.

The protein belongs to the RNA polymerase beta' chain family. The RNAP catalytic core consists of 2 alpha, 1 beta, 1 beta' and 1 omega subunit. When a sigma factor is associated with the core the holoenzyme is formed, which can initiate transcription. Requires Mg(2+) as cofactor. Zn(2+) is required as a cofactor.

It catalyses the reaction RNA(n) + a ribonucleoside 5'-triphosphate = RNA(n+1) + diphosphate. In terms of biological role, DNA-dependent RNA polymerase catalyzes the transcription of DNA into RNA using the four ribonucleoside triphosphates as substrates. This is DNA-directed RNA polymerase subunit beta' from Campylobacter lari (strain RM2100 / D67 / ATCC BAA-1060).